The chain runs to 120 residues: UPF0231 protein YacL (120 aa).

The protein belongs to the UPF0231 family.

The chain is UPF0231 protein YacL (yacL) from Shigella flexneri.